Here is a 102-residue protein sequence, read N- to C-terminus: Phosphoribosyl-ATP pyrophosphatase (102 aa).

This sequence belongs to the PRA-PH family.

The protein localises to the cytoplasm. The enzyme catalyses 1-(5-phospho-beta-D-ribosyl)-ATP + H2O = 1-(5-phospho-beta-D-ribosyl)-5'-AMP + diphosphate + H(+). Its pathway is amino-acid biosynthesis; L-histidine biosynthesis; L-histidine from 5-phospho-alpha-D-ribose 1-diphosphate: step 2/9. The polypeptide is Phosphoribosyl-ATP pyrophosphatase (Ignicoccus hospitalis (strain KIN4/I / DSM 18386 / JCM 14125)).